The primary structure comprises 281 residues: Small ribosomal subunit protein uS2 (281 aa).

The disordered stretch occupies residues Leu-225–Glu-281. The segment covering Arg-245 to Ser-256 has biased composition (basic residues). The span at Glu-262–Ala-272 shows a compositional bias: low complexity.

This sequence belongs to the universal ribosomal protein uS2 family.

This is Small ribosomal subunit protein uS2 from Porphyromonas gingivalis (strain ATCC 33277 / DSM 20709 / CIP 103683 / JCM 12257 / NCTC 11834 / 2561).